A 318-amino-acid chain; its full sequence is MQNNSTSFPTAIFLMGPTASGKTDLAIKLHETLPVEIISVDSALIYKGMDIGTAKPSKEELALAPHRLIDILDPAESYSAMNFRADALREMTDITAQGKIPLLVGGTMLYYKALIEGLSPLPNADEKIRSEIEARAQQTGWAVLHQELAKIDPASAARINPNDSQRINRALEVFYLTGKSLTELTAQKGDALPYNVLQFAIAPEDRSILHERIELRFKKMVELGFKAEVEKLYARSDLSPDLPSIRCVGYRQMWEHLRGDYGFDEAIYRGICATRQLAKRQITWLRGWKTPIRWLNSLQNEKNQKKIQQVFYLSMQNR.

16 to 23 (GPTASGKT) serves as a coordination point for ATP. 18–23 (TASGKT) is a substrate binding site. Interaction with substrate tRNA stretches follow at residues 41-44 (DSAL), 165-169 (QRINR), 246-251 (RCVGYR), and 279-286 (KRQITWLR).

This sequence belongs to the IPP transferase family. In terms of assembly, monomer. Mg(2+) is required as a cofactor.

It carries out the reaction adenosine(37) in tRNA + dimethylallyl diphosphate = N(6)-dimethylallyladenosine(37) in tRNA + diphosphate. Catalyzes the transfer of a dimethylallyl group onto the adenine at position 37 in tRNAs that read codons beginning with uridine, leading to the formation of N6-(dimethylallyl)adenosine (i(6)A). This Actinobacillus succinogenes (strain ATCC 55618 / DSM 22257 / CCUG 43843 / 130Z) protein is tRNA dimethylallyltransferase.